The chain runs to 198 residues: IMP cyclohydrolase (198 aa).

It belongs to the archaeal IMP cyclohydrolase family.

It carries out the reaction IMP + H2O = 5-formamido-1-(5-phospho-D-ribosyl)imidazole-4-carboxamide. It participates in purine metabolism; IMP biosynthesis via de novo pathway; IMP from 5-formamido-1-(5-phospho-D-ribosyl)imidazole-4-carboxamide: step 1/1. In terms of biological role, catalyzes the cyclization of 5-formylamidoimidazole-4-carboxamide ribonucleotide to IMP. The protein is IMP cyclohydrolase of Methanopyrus kandleri (strain AV19 / DSM 6324 / JCM 9639 / NBRC 100938).